The sequence spans 189 residues: MEQIDKQKIADAVKVILEAVGENPEREGLIDTPMRVARMYEEVFAGLKKDPSVHFDTIFEEQHEELVLVKDIRFSSMCEHHLVPFFGVAHVAYLPQNGRVAGLSKLARVVDDVSRRPQLQERITTTVAEIMMEKLKPLGVMVIMEAEHMCMTIRGVNKPGTKTITSAVRGAFKNDDKLRSEVLALIKHN.

The Zn(2+) site is built by C78, H81, and C150.

The protein belongs to the GTP cyclohydrolase I family. Homomer.

The catalysed reaction is GTP + H2O = 7,8-dihydroneopterin 3'-triphosphate + formate + H(+). Its pathway is cofactor biosynthesis; 7,8-dihydroneopterin triphosphate biosynthesis; 7,8-dihydroneopterin triphosphate from GTP: step 1/1. This chain is GTP cyclohydrolase 1, found in Listeria monocytogenes serotype 4b (strain CLIP80459).